Consider the following 559-residue polypeptide: Poly [ADP-ribose] polymerase 2 (559 aa).

Residues 1 to 58 (MAPRRQRSGSGRRVLNEAKKVDNGNKATEDDSPPGKKMRTCQRKGPMAGGKDADRTKD) form a disordered region. Residues 1-83 (MAPRRQRSGS…VDPECAAKLG (83 aa)) are N-terminal region (NTR). Residues 14–29 (VLNEAKKVDNGNKATE) show a composition bias toward basic and acidic residues. 2 short sequence motifs (nuclear localization signal) span residues 19–20 (KK) and 33–39 (PPGKKMR). Lysine 36 and lysine 37 each carry N6-(ADP-ribosyl)lysine; alternate. 2 positions are modified to N6-acetyllysine; alternate: lysine 36 and lysine 37. Positions 84 to 181 (KAHVYCEGDD…ENFEKVPGKY (98 aa)) constitute a WGR domain. The region spanning 207–324 (ESQLDLRVQE…DIEIALKLVK (118 aa)) is the PARP alpha-helical domain. Phosphoserine is present on serine 208. Residues 332–559 (HPLDQHYRNL…KIQFNFLQLW (228 aa)) enclose the PARP catalytic domain. NAD(+) contacts are provided by residues 404 to 406 (HGS), glycine 413, arginine 420, and serine 446. The For poly [ADP-ribose] polymerase activity role is filled by glutamate 534.

The protein belongs to the ARTD/PARP family. As to quaternary structure, component of a base excision repair (BER) complex, containing at least XRCC1, PARP1, POLB and LRIG3. Homo- and heterodimer with PARP1. Interacts (via the PARP catalytic domain) with HPF1. Interacts with core nucleosomes. Post-translationally, auto poly-ADP-ribosylated on serine residues, leading to dissociation of the PARP2-HPF1 complex from chromatin. Poly-ADP-ribosylated by PARP1. Acetylation reduces DNA binding and enzymatic activity. In terms of processing, proteolytically cleaved by caspase-8 (CASP8) in response to apoptosis, leading to its inactivation. As to expression, widely expressed; the highest levels were in testis followed by ovary. Expression is correlated with proliferation, with higher levels occurring during early fetal development and organogenesis and in the highly proliferative cell compartments of adult.

The protein resides in the nucleus. The protein localises to the chromosome. The enzyme catalyses NAD(+) + (ADP-D-ribosyl)n-acceptor = nicotinamide + (ADP-D-ribosyl)n+1-acceptor + H(+).. It catalyses the reaction L-seryl-[protein] + NAD(+) = O-(ADP-D-ribosyl)-L-seryl-[protein] + nicotinamide + H(+). The catalysed reaction is L-aspartyl-[protein] + NAD(+) = 4-O-(ADP-D-ribosyl)-L-aspartyl-[protein] + nicotinamide. It carries out the reaction L-glutamyl-[protein] + NAD(+) = 5-O-(ADP-D-ribosyl)-L-glutamyl-[protein] + nicotinamide. With respect to regulation, ADP-ribosyltransferase activity is regulated via an allosteric activation mechanism. In absence of activation signal, PARP2 is autoinhibited by the PARP alpha-helical domain (also named HD region), which prevents effective NAD(+)-binding. Activity is highly stimulated by signals, which unfold the PARP alpha-helical domain, relieving autoinhibition. Poly-ADP-ribosyltransferase activity is tightly regulated and PARP2 is removed from damaged chromatin following initial poly-ADP-ribosylation of chromatin to avoid prolonged residence (trapping) that has cytotoxic consequences. CHD1L promotes PARP2 removal from chromatin. Functionally, poly-ADP-ribosyltransferase that mediates poly-ADP-ribosylation of proteins and plays a key role in DNA repair. Mediates glutamate, aspartate or serine ADP-ribosylation of proteins: the ADP-D-ribosyl group of NAD(+) is transferred to the acceptor carboxyl group of target residues and further ADP-ribosyl groups are transferred to the 2'-position of the terminal adenosine moiety, building up a polymer with an average chain length of 20-30 units. Serine ADP-ribosylation of proteins constitutes the primary form of ADP-ribosylation of proteins in response to DNA damage. Mediates glutamate and aspartate ADP-ribosylation of target proteins in absence of HPF1. Following interaction with HPF1, catalyzes serine ADP-ribosylation of target proteins; HPF1 conferring serine specificity by completing the PARP2 active site. PARP2 initiates the repair of double-strand DNA breaks: recognizes and binds DNA breaks within chromatin and recruits HPF1, licensing serine ADP-ribosylation of target proteins, such as histones, thereby promoting decompaction of chromatin and the recruitment of repair factors leading to the reparation of DNA strand breaks. HPF1 initiates serine ADP-ribosylation but restricts the polymerase activity of PARP2 in order to limit the length of poly-ADP-ribose chains. Specifically mediates formation of branched poly-ADP-ribosylation. Branched poly-ADP-ribose chains are specifically recognized by some factors, such as APLF. In addition to proteins, also able to ADP-ribosylate DNA: preferentially acts on 5'-terminal phosphates at DNA strand breaks termini in nicked duplex. This chain is Poly [ADP-ribose] polymerase 2 (Parp2), found in Mus musculus (Mouse).